The following is a 1330-amino-acid chain: DNA-directed RNA polymerase subunit beta'' (1330 aa).

Zn(2+)-binding residues include C214, C282, C289, and C292.

It belongs to the RNA polymerase beta' chain family. RpoC2 subfamily. In plastids the minimal PEP RNA polymerase catalytic core is composed of four subunits: alpha, beta, beta', and beta''. When a (nuclear-encoded) sigma factor is associated with the core the holoenzyme is formed, which can initiate transcription. Zn(2+) serves as cofactor.

It is found in the plastid. The protein localises to the chloroplast. The enzyme catalyses RNA(n) + a ribonucleoside 5'-triphosphate = RNA(n+1) + diphosphate. Functionally, DNA-dependent RNA polymerase catalyzes the transcription of DNA into RNA using the four ribonucleoside triphosphates as substrates. This chain is DNA-directed RNA polymerase subunit beta'', found in Physcomitrium patens (Spreading-leaved earth moss).